The primary structure comprises 322 residues: Probable transposase for insertion sequence element ISA1214 (322 aa).

The protein belongs to the transposase 11 family.

In terms of biological role, involved in the transposition of the insertion sequence ISA1214. The protein is Probable transposase for insertion sequence element ISA1214 of Archaeoglobus fulgidus (strain ATCC 49558 / DSM 4304 / JCM 9628 / NBRC 100126 / VC-16).